Here is a 525-residue protein sequence, read N- to C-terminus: MRLAFWLYEGTALHGISRVTNSMKGVHTVYHAPQGDDYITATYTMLERTPEFPALSISVVRGRDLAQGVSRLPATLQQVEEHYHPELSVIAPSCSTALLQEDLHQLAAQSGVPQDKLMVYAVNPFRVTENEAADGLLTALVKRYAAEGPKTAAPTVNLLGFTSLGFHLKANLTSIRRLLTTLGVKVNVVAPWGAGIADLKRLPEAWLTIAPFREIGQTAAAYLEETFGVPTEYGTPLGVEPTLRWLRAVIEKLNTVGAKEGATPIAMPELHAFSLDGMSAPSGVPWFARTADMESFSNKKAFVFGDATTTVAMVKFLRDELGMQIIGAGTYLERHADWVRKELDGYLPGALMVTERFQDVAQVIEDEMPDLVCGTQMERHSCRKLDVPCMVVCPPTHIENHLLGYYPFLGFDGADVIADRVYISCKLGLEKHLIDFFGDAGLEYEEPSASSENGSAPLSAGTATPAAAPEEGGMAWTDEAETMLKKVPFFVRKKVRKNTENFAEENGESRVSVEVFRRAKESLGG.

A [4Fe-4S] cluster-binding site is contributed by aspartate 36. Catalysis depends on aspartate 292, which acts as the Proton donor. Glycine 428–leucine 429 serves as a coordination point for substrate. Positions proline 447–glutamate 470 are disordered. Residues alanine 460–glutamate 470 are compositionally biased toward low complexity.

The protein belongs to the ChlB/BchB/BchZ family. As to quaternary structure, protochlorophyllide reductase is composed of three subunits; BchL, BchN and BchB. Forms a heterotetramer of two BchB and two BchN subunits. Requires [4Fe-4S] cluster as cofactor.

It catalyses the reaction chlorophyllide a + oxidized 2[4Fe-4S]-[ferredoxin] + 2 ADP + 2 phosphate = protochlorophyllide a + reduced 2[4Fe-4S]-[ferredoxin] + 2 ATP + 2 H2O. The protein operates within porphyrin-containing compound metabolism; bacteriochlorophyll biosynthesis (light-independent). Its function is as follows. Component of the dark-operative protochlorophyllide reductase (DPOR) that uses Mg-ATP and reduced ferredoxin to reduce ring D of protochlorophyllide (Pchlide) to form chlorophyllide a (Chlide). This reaction is light-independent. The NB-protein (BchN-BchB) is the catalytic component of the complex. The chain is Light-independent protochlorophyllide reductase subunit B from Chlorobium luteolum (strain DSM 273 / BCRC 81028 / 2530) (Pelodictyon luteolum).